Reading from the N-terminus, the 630-residue chain is MDYSFDTTAEDPWVRISDCIKNLFSPIMSENPGHMPLQPNASLSEEDGTQGHPDGNPPKLDTANGTPKVYKSADRSTVKKGPPVAPKPAWFRQSLKGLRNRASDPRGLPDPALSTQPAPASREHLGPHIRASSSSSIKQRISSFETFGSSQLPDKGAQRLSLQPSSGEAAKPLGKHEGGRFSGLLGRGAAPTLVPQQPEQVLPSGSPAATEARDPGVSESPPPGLQPNQKTLPTGSDPLLRLLPTQTEKSQGPVLKMPSQRARSFPLTRSQSCETKLLDEKTSKLYSISSQVSSAVMKSLLCLPSSLSCAQTPCIPKEGASPTSSSNEDSAANGSAETSASDTGFSLNLSELREYTEGLTEAKEDDDGDHSSHQSGQSVISLLSSEELKQLIEEVKVLDEATLKQLDSIHVTILHKEEGAGLGFSLAGGADLENKVITVHKVFPNGLASQEGTIQKGNEVLSINGKSLKGTTHNDALAILRQAREPRQAVIVTRKLTAESMPDLNSTTDSAASASAASDVSVESSAEATVYTVTLEKMSAGLGFSLEGGKGSLHGDKPLTINRIFKGAASEQSETIQPGDEILQLAGTAMQGLTRFEAWNIIKALPDGPVTTVIRRKSLQPKETTAAADS.

2 disordered regions span residues 30-268 (ENPG…FPLT) and 316-343 (PKEG…ASDT). Residues 129–143 (IRASSSSSIKQRISS) show a composition bias toward low complexity. A Phosphoserine modification is found at serine 220. The span at 321-343 (SPTSSSNEDSAANGSAETSASDT) shows a compositional bias: polar residues. The tract at residues 404–500 (KQLDSIHVTI…IVTRKLTAES (97 aa)) is interaction with PPP1R12A, PPP1R12B and PPP1R12C. 2 PDZ domains span residues 410 to 495 (HVTI…VTRK) and 532 to 617 (TVTL…IRRK).

As to quaternary structure, homotetramer. Pro-interleukin-16 interacts (via PDZ 2 domain) with PPP1R12A, PPP1R12B and PPP1R12C. Pro-interleukin-16 interacts with GRIN2A. Pro-interleukin-16 interacts with GABPB1. Pro-interleukin-16 interacts (via PDZ 3 domain) with HDAC3.

The protein resides in the secreted. Its subcellular location is the cytoplasm. It is found in the nucleus. Functionally, interleukin-16 stimulates a migratory response in CD4+ lymphocytes, monocytes, and eosinophils. Primes CD4+ T-cells for IL-2 and IL-15 responsiveness. Also induces T-lymphocyte expression of interleukin 2 receptor. Ligand for CD4. In terms of biological role, pro-interleukin-16 is involved in cell cycle progression in T-cells. Appears to be involved in transcriptional regulation of SKP2 and is probably part of a transcriptional repression complex on the core promoter of the SKP2 gene. May act as a scaffold for GABPB1 (the DNA-binding subunit the GABP transcription factor complex) and HDAC3 thus maintaining transcriptional repression and blocking cell cycle progression in resting T-cells. This Macaca fascicularis (Crab-eating macaque) protein is Pro-interleukin-16 (IL16).